Here is a 188-residue protein sequence, read N- to C-terminus: Gamma-glutamylcyclotransferase (188 aa).

19-24 (YFAYGS) is a binding site for substrate. The active-site Proton acceptor is the Glu-98. Tyr-139 is a substrate binding site. A Phosphoserine modification is found at Ser-173.

This sequence belongs to the gamma-glutamylcyclotransferase family. Homodimer.

The enzyme catalyses an alpha-(gamma-L-glutamyl)-L-amino acid = 5-oxo-L-proline + an L-alpha-amino acid. Catalyzes the formation of 5-oxoproline from gamma-glutamyl dipeptides and may play a significant role in glutathione homeostasis. Induces release of cytochrome c from mitochondria with resultant induction of apoptosis. In Homo sapiens (Human), this protein is Gamma-glutamylcyclotransferase.